The primary structure comprises 157 residues: Ribonuclease H (157 aa).

Residues 1-146 (MPDLFAYTDG…ADELARAGMA (146 aa)) enclose the RNase H type-1 domain. Mg(2+) is bound by residues Asp9, Glu52, Asp74, and Asp138.

The protein belongs to the RNase H family. Monomer. Requires Mg(2+) as cofactor.

It localises to the cytoplasm. It carries out the reaction Endonucleolytic cleavage to 5'-phosphomonoester.. In terms of biological role, endonuclease that specifically degrades the RNA of RNA-DNA hybrids. This Ruegeria sp. (strain TM1040) (Silicibacter sp.) protein is Ribonuclease H.